Consider the following 81-residue polypeptide: Neuronatin (81 aa).

Belongs to the neuronatin family.

May participate in the maintenance of segment identity in the hindbrain and pituitary development, and maturation or maintenance of the overall structure of the nervous system. May function as a regulatory subunit of ion channels. The chain is Neuronatin (NNAT) from Sus scrofa (Pig).